We begin with the raw amino-acid sequence, 99 residues long: Seminal vesicle secretory protein 6 (99 aa).

Positions 1–21 are cleaved as a signal peptide; the sequence is MSPTSFFLLTMLLVLVTETAA.

Belongs to the SVP2/SVP5/SVP6 family. As to expression, testis.

The protein localises to the secreted. It is found in the extracellular space. This chain is Seminal vesicle secretory protein 6 (Svs6), found in Mus musculus (Mouse).